A 708-amino-acid polypeptide reads, in one-letter code: Kin of IRRE-like protein 2 (708 aa).

A signal peptide spans 1–20 (MLRMRVPALLVLLFCFRGRA). Over 21–510 (GPSPHFLQQP…GRRDLLPTVR (490 aa)) the chain is Extracellular. Ig-like C2-type domains follow at residues 24 to 118 (PHFL…AQLH), 123 to 222 (PEAP…ITLS), 227 to 307 (PEVT…TALD), 312 to 394 (PILQ…ARLT), and 398 to 501 (PPVV…ASLG). Cysteine 45 and cysteine 103 are disulfide-bonded. N-linked (GlcNAc...) asparagine glycosylation is present at asparagine 143. Disulfide bonds link cysteine 146–cysteine 204 and cysteine 248–cysteine 291. Positions 149–151 (RGD) match the Cell attachment site motif. Asparagine 301 carries N-linked (GlcNAc...) asparagine glycosylation. Cystine bridges form between cysteine 333–cysteine 375 and cysteine 419–cysteine 485. The N-linked (GlcNAc...) asparagine glycan is linked to asparagine 484. A helical membrane pass occupies residues 511–531 (IVAGVAAATTTLLMVITGVAL). Residues 532–708 (CCWRHSKASA…PSHPRLQTHV (177 aa)) are Cytoplasmic-facing. The tract at residues 545–601 (EQKNLMRIPGSSDGSSSRGPEEEETGSREDRGPIVHTDHSDLVLEEEGTLETKDPTN) is disordered. Residues 553–562 (PGSSDGSSSR) show a composition bias toward low complexity. The segment covering 569-586 (TGSREDRGPIVHTDHSDL) has biased composition (basic and acidic residues). A Phosphoserine modification is found at serine 571. 3 positions are modified to phosphotyrosine: tyrosine 603, tyrosine 604, and tyrosine 661. Residues 684-708 (LAPGTPPFPYAAFPTPSHPRLQTHV) form a disordered region.

The protein belongs to the immunoglobulin superfamily. Homodimer. Interacts with NPHS2/podocin (via the C-terminus). Interacts with NPHS1 (via the Ig-like domains). Interacts with FYN. Post-translationally, N-glycosylated. In terms of processing, the extracellular domain is cleaved leading to the generation of a soluble fragment and a membrane-bound C-terminal fragment, which is further cleaved by gamma-secretase. Highly expressed in beta-cells of the pancreatic islets.

Its subcellular location is the cell membrane. Functionally, may regulate basal insulin secretion. This is Kin of IRRE-like protein 2 (KIRREL2) from Homo sapiens (Human).